The sequence spans 448 residues: Argininosuccinate synthase (448 aa).

Residues 17–25 (AFSGGLDTS) and A43 each bind ATP. Y99 is a binding site for L-citrulline. Positions 129 and 131 each coordinate ATP. Positions 131, 135, and 136 each coordinate L-aspartate. Position 135 (N135) interacts with L-citrulline. D136 serves as a coordination point for ATP. Residues R139 and S192 each contribute to the L-citrulline site. ATP is bound at residue D194. L-citrulline is bound by residues T201, E203, and E280.

The protein belongs to the argininosuccinate synthase family. Type 2 subfamily. Homotetramer.

The protein resides in the cytoplasm. The enzyme catalyses L-citrulline + L-aspartate + ATP = 2-(N(omega)-L-arginino)succinate + AMP + diphosphate + H(+). The protein operates within amino-acid biosynthesis; L-arginine biosynthesis; L-arginine from L-ornithine and carbamoyl phosphate: step 2/3. This is Argininosuccinate synthase from Acidovorax ebreus (strain TPSY) (Diaphorobacter sp. (strain TPSY)).